A 599-amino-acid polypeptide reads, in one-letter code: Aspartate--tRNA ligase (599 aa).

Glu180 contacts L-aspartate. Residues 204-207 are aspartate; it reads QIFK. Arg226 contributes to the L-aspartate binding site. Residues 226 to 228 and Gln235 each bind ATP; that span reads RDE. His454 provides a ligand contact to L-aspartate. Residue Glu488 participates in ATP binding. Arg495 serves as a coordination point for L-aspartate. 540–543 is a binding site for ATP; the sequence is GLDR.

Belongs to the class-II aminoacyl-tRNA synthetase family. Type 1 subfamily. In terms of assembly, homodimer.

Its subcellular location is the cytoplasm. The catalysed reaction is tRNA(Asp) + L-aspartate + ATP = L-aspartyl-tRNA(Asp) + AMP + diphosphate. In terms of biological role, catalyzes the attachment of L-aspartate to tRNA(Asp) in a two-step reaction: L-aspartate is first activated by ATP to form Asp-AMP and then transferred to the acceptor end of tRNA(Asp). This chain is Aspartate--tRNA ligase, found in Clostridium beijerinckii (strain ATCC 51743 / NCIMB 8052) (Clostridium acetobutylicum).